The following is a 614-amino-acid chain: DNA repair protein rad26 (614 aa).

Residues 29 to 43 (QAQTQVQAQSSQVVV) show a composition bias toward low complexity. Disordered regions lie at residues 29–76 (QAQT…QASL) and 157–214 (KKMK…TAED). 2 stretches are compositionally biased toward polar residues: residues 50-76 (QNLN…QASL) and 181-190 (LLSSSDQLAK). Positions 191-207 (STKHAAKNSPSKKKRKT) are enriched in basic residues.

Interacts with cds1.

It is found in the nucleus. Its function is as follows. Involved in cell cycle arrest when DNA synthesis is inhibited by hydroxyurea, and in mitosis arrest after treatment with DNA-damaging agents. This protein is S phase-specific. The protein is DNA repair protein rad26 (rad26) of Schizosaccharomyces pombe (strain 972 / ATCC 24843) (Fission yeast).